The chain runs to 252 residues: Phosphosulfolactate synthase (252 aa).

It belongs to the phosphosulfolactate synthase family.

The enzyme catalyses (2R)-O-phospho-3-sulfolactate = phosphoenolpyruvate + sulfite + H(+). Its function is as follows. Catalyzes the addition of sulfite to phosphoenolpyruvate (PEP) to yield (2R)-phospho-3-sulfolactate (PSL). Is probably involved in the biosynthesis of L-sulfolactate, which is a major constituent of sporulating cells and mature spores. The chain is Phosphosulfolactate synthase (yitD) from Bacillus subtilis (strain 168).